Here is a 551-residue protein sequence, read N- to C-terminus: Ubiquitin domain-containing protein DSK2b (551 aa).

A Ubiquitin-like domain is found at 18-93 (VAVNIRCSNG…IHMVRGSAPS (76 aa)). The interval 88 to 127 (RGSAPSSAPPPAPAASQTTAPSVTRGVGSDNSSNLGGASP) is disordered. 2 consecutive STI1 domains span residues 143-184 (GNAM…QNLM) and 197-236 (NPQM…MREM). The segment covering 294–319 (QGVTTQGSDASNNSSTPNAGTGTIPN) has biased composition (polar residues). The disordered stretch occupies residues 294–336 (QGVTTQGSDASNNSSTPNAGTGTIPNANPLPNPWGATGGQTTA). 2 consecutive STI1 domains span residues 373 to 410 (SPLG…MNQL) and 414 to 449 (NPQL…MQQM). Residues 455–475 (SLSQNRNTASQDAGQTGAATG) are disordered. Residues 465 to 475 (QDAGQTGAATG) show a composition bias toward low complexity. Positions 504 to 548 (PPEERYATQLQQLQEMGFYDRAENIRALLATNGNVNAAVERLLGS) constitute a UBA domain.

Interacts with 'Lys-48'-linked polyubiquitin chains via its UBA domain. Interacts with RPN10 via its ubiquitin-like domain. Interacts with PEX2 and PEX12. In terms of tissue distribution, ubiquitous.

It is found in the nucleus. Its subcellular location is the cytoplasm. Its function is as follows. Binds and presumably selects ubiquitin-conjugates for destruction. Prefers multiubiquitin chains rather than single ubiquitins, with a binding affinity for 'Lys-48'-linked ubiquitin chains. Acts as a ubiquitin receptor that associates with the 26S proteasomal docking subunit RPN10 for the indirect recognition of ubiquitinated substrates of ubiquitin/26S proteasome-mediated proteolysis (UPP). This Arabidopsis thaliana (Mouse-ear cress) protein is Ubiquitin domain-containing protein DSK2b (DSK2B).